Consider the following 71-residue polypeptide: ATP synthase subunit c (71 aa).

The next 2 membrane-spanning stretches (helical) occupy residues 4 to 24 (IAAAIAIMGAAIGAGYGNGQV) and 47 to 67 (FIGVALVEAVPILGVVIALIL).

Belongs to the ATPase C chain family. As to quaternary structure, F-type ATPases have 2 components, F(1) - the catalytic core - and F(0) - the membrane proton channel. F(1) has five subunits: alpha(3), beta(3), gamma(1), delta(1), epsilon(1). F(0) has three main subunits: a(1), b(2) and c(10-14). The alpha and beta chains form an alternating ring which encloses part of the gamma chain. F(1) is attached to F(0) by a central stalk formed by the gamma and epsilon chains, while a peripheral stalk is formed by the delta and b chains.

The protein resides in the cell membrane. F(1)F(0) ATP synthase produces ATP from ADP in the presence of a proton or sodium gradient. F-type ATPases consist of two structural domains, F(1) containing the extramembraneous catalytic core and F(0) containing the membrane proton channel, linked together by a central stalk and a peripheral stalk. During catalysis, ATP synthesis in the catalytic domain of F(1) is coupled via a rotary mechanism of the central stalk subunits to proton translocation. Its function is as follows. Key component of the F(0) channel; it plays a direct role in translocation across the membrane. A homomeric c-ring of between 10-14 subunits forms the central stalk rotor element with the F(1) delta and epsilon subunits. This is ATP synthase subunit c from Enterococcus hirae (strain ATCC 9790 / DSM 20160 / JCM 8729 / LMG 6399 / NBRC 3181 / NCIMB 6459 / NCDO 1258 / NCTC 12367 / WDCM 00089 / R).